Reading from the N-terminus, the 300-residue chain is Protein Bel-1 (300 aa).

The segment at 1-50 is disordered; sequence MDSYEKEESVASTSGIQDLQTLSELVGPENAGEGELTIAEEPEENPRRPR. Positions 10–23 are enriched in polar residues; it reads VASTSGIQDLQTLS. The DNA-binding element occupies 89 to 200; the sequence is SKSLCKRLIL…SEGPKPRPRH (112 aa). A disordered region spans residues 209–244; that stretch reads FEKHHKPRQKRPRRRSIDNESCASSSDTMANEPGSL. The segment covering 211 to 222 has biased composition (basic residues); sequence KHHKPRQKRPRR. The Nuclear localization signal motif lies at 214–223; the sequence is KPRQKRPRRR. A transactivation domain region spans residues 224 to 300; it reads SIDNESCASS…PSGSGEHSVL (77 aa). Over residues 227–237 the composition is skewed to polar residues; the sequence is NESCASSSDTM.

Homodimer or homomultimer. Forms complexes with the host nuclear factors NFIA, NFIB, NFIC or NFIX.

Its subcellular location is the host nucleus. In terms of biological role, transcriptional transactivator that activates the viral internal promoter (IP), thereby enhancing its own expression. This transactivation is repressed by nuclear factor I. Also transactivates the long terminal repeat (LTR) promoter, thereby inducing structural gene expression, initiating the late phase of infection. It is therefore a key regulator of viral gene expression. It directly binds to and activates DNA target sites of viral promoters and those of distinct cellular genes. Required for viral replication. This chain is Protein Bel-1 (bel1), found in Human spumaretrovirus (SFVcpz(hu)).